A 754-amino-acid polypeptide reads, in one-letter code: 1,4-alpha-glucan branching enzyme GlgB (754 aa).

The active-site Nucleophile is aspartate 431. The Proton donor role is filled by glutamate 484.

This sequence belongs to the glycosyl hydrolase 13 family. GlgB subfamily. In terms of assembly, monomer.

The catalysed reaction is Transfers a segment of a (1-&gt;4)-alpha-D-glucan chain to a primary hydroxy group in a similar glucan chain.. The protein operates within glycan biosynthesis; glycogen biosynthesis. Catalyzes the formation of the alpha-1,6-glucosidic linkages in glycogen by scission of a 1,4-alpha-linked oligosaccharide from growing alpha-1,4-glucan chains and the subsequent attachment of the oligosaccharide to the alpha-1,6 position. This chain is 1,4-alpha-glucan branching enzyme GlgB, found in Prochlorococcus marinus (strain MIT 9301).